Reading from the N-terminus, the 82-residue chain is Large ribosomal subunit protein bL27 (82 aa).

Residues 1 to 21 (MAHKKGASSSRNGRDSNAKRL) form a disordered region.

Belongs to the bacterial ribosomal protein bL27 family.

The chain is Large ribosomal subunit protein bL27 from Tropheryma whipplei (strain Twist) (Whipple's bacillus).